The chain runs to 180 residues: CASP-like protein XL3 (180 aa).

Residues 1-7 (MELSIQK) are Cytoplasmic-facing. The helical transmembrane segment at 8 to 28 (IEALIRLSTIVMLVLTACLIG) threads the bilayer. Topologically, residues 29–49 (LDSQTKVIFYVQKKASFKDLR) are extracellular. A helical membrane pass occupies residues 50 to 70 (ALVGLLYITSLAAAYNLLQLC). The Cytoplasmic portion of the chain corresponds to 71–98 (CSSFSASYKGTSLQSYAYLAWLRYILDQ). A helical transmembrane segment spans residues 99–119 (AVVYAVFAGNLAALEHSFLVL). The Extracellular segment spans residues 120–140 (TGEENFQWLKWCNKYTRFCTQ). The helical transmembrane segment at 141–161 (IGGSLLCGFVASLLMFSIASI) threads the bilayer. Residues 162–180 (SAFNLFRQYSPTKFMHLKL) are Cytoplasmic-facing.

It belongs to the Casparian strip membrane proteins (CASP) family. In terms of assembly, homodimer and heterodimers.

The protein resides in the cell membrane. The polypeptide is CASP-like protein XL3 (XL3) (Gossypium hirsutum (Upland cotton)).